Consider the following 258-residue polypeptide: Acyl-[acyl-carrier-protein]--UDP-N-acetylglucosamine O-acyltransferase (258 aa).

This sequence belongs to the transferase hexapeptide repeat family. LpxA subfamily. Homotrimer.

It is found in the cytoplasm. The enzyme catalyses a (3R)-hydroxyacyl-[ACP] + UDP-N-acetyl-alpha-D-glucosamine = a UDP-3-O-[(3R)-3-hydroxyacyl]-N-acetyl-alpha-D-glucosamine + holo-[ACP]. It functions in the pathway glycolipid biosynthesis; lipid IV(A) biosynthesis; lipid IV(A) from (3R)-3-hydroxytetradecanoyl-[acyl-carrier-protein] and UDP-N-acetyl-alpha-D-glucosamine: step 1/6. Involved in the biosynthesis of lipid A, a phosphorylated glycolipid that anchors the lipopolysaccharide to the outer membrane of the cell. The sequence is that of Acyl-[acyl-carrier-protein]--UDP-N-acetylglucosamine O-acyltransferase from Azotobacter vinelandii (strain DJ / ATCC BAA-1303).